We begin with the raw amino-acid sequence, 889 residues long: DNA-directed RNA polymerase subunit Rpo1N (889 aa).

Cysteine 62, cysteine 65, cysteine 72, histidine 75, cysteine 102, cysteine 105, cysteine 149, and cysteine 152 together coordinate Zn(2+). The Mg(2+) site is built by aspartate 466, aspartate 468, and aspartate 470.

This sequence belongs to the RNA polymerase beta' chain family. Part of the RNA polymerase complex. Mg(2+) serves as cofactor. The cofactor is Zn(2+).

The protein localises to the cytoplasm. The catalysed reaction is RNA(n) + a ribonucleoside 5'-triphosphate = RNA(n+1) + diphosphate. DNA-dependent RNA polymerase (RNAP) catalyzes the transcription of DNA into RNA using the four ribonucleoside triphosphates as substrates. Forms the clamp head domain. This chain is DNA-directed RNA polymerase subunit Rpo1N, found in Methanococcus vannielii (strain ATCC 35089 / DSM 1224 / JCM 13029 / OCM 148 / SB).